We begin with the raw amino-acid sequence, 518 residues long: Glutamate--cysteine ligase (518 aa).

This sequence belongs to the glutamate--cysteine ligase type 1 family. Type 1 subfamily.

It catalyses the reaction L-cysteine + L-glutamate + ATP = gamma-L-glutamyl-L-cysteine + ADP + phosphate + H(+). Its pathway is sulfur metabolism; glutathione biosynthesis; glutathione from L-cysteine and L-glutamate: step 1/2. The sequence is that of Glutamate--cysteine ligase from Salmonella arizonae (strain ATCC BAA-731 / CDC346-86 / RSK2980).